An 82-amino-acid chain; its full sequence is Toxin Tpa7 (82 aa).

The first 20 residues, 1–20, serve as a signal peptide directing secretion; sequence MKGMILLISCLMLIEVVVEC. The LCN-type CS-alpha/beta domain maps to 21 to 82; that stretch reads KEGYPLDTLN…KIWDLKKNKC (62 aa). Intrachain disulfides connect cysteine 32-cysteine 82, cysteine 36-cysteine 58, cysteine 44-cysteine 63, and cysteine 48-cysteine 65.

Belongs to the long (4 C-C) scorpion toxin superfamily. Sodium channel inhibitor family. Beta subfamily. In terms of tissue distribution, expressed by the venom gland.

The protein localises to the secreted. Functionally, beta toxins bind voltage-independently at site-4 of sodium channels (Nav) and shift the voltage of activation toward more negative potentials thereby affecting sodium channel activation and promoting spontaneous and repetitive firing. This is Toxin Tpa7 from Tityus pachyurus (Colombian scorpion).